Consider the following 443-residue polypeptide: ATP-dependent protease ATPase subunit HslU (443 aa).

ATP contacts are provided by residues Ile-18, 60 to 65 (GVGKTE), Asp-256, Glu-321, and Arg-393.

It belongs to the ClpX chaperone family. HslU subfamily. As to quaternary structure, a double ring-shaped homohexamer of HslV is capped on each side by a ring-shaped HslU homohexamer. The assembly of the HslU/HslV complex is dependent on binding of ATP.

It localises to the cytoplasm. ATPase subunit of a proteasome-like degradation complex; this subunit has chaperone activity. The binding of ATP and its subsequent hydrolysis by HslU are essential for unfolding of protein substrates subsequently hydrolyzed by HslV. HslU recognizes the N-terminal part of its protein substrates and unfolds these before they are guided to HslV for hydrolysis. This is ATP-dependent protease ATPase subunit HslU from Escherichia coli O139:H28 (strain E24377A / ETEC).